A 723-amino-acid chain; its full sequence is Choline transporter-like protein 4 (723 aa).

At 1 to 36 (MGKKKQEEEQNSSEYGAPAQYDPTFNGPIHKRSCTD) the chain is on the cytoplasmic side. Residues 37 to 57 (IICCVLFMLVITGYMVVGILA) traverse the membrane as a helical segment. The Extracellular segment spans residues 58–245 (WLYGDPRHVL…RIFEDFAKTW (188 aa)). 4 N-linked (GlcNAc...) asparagine glycosylation sites follow: N71, N202, N211, and N219. The helical transmembrane segment at 246-266 (QWIVAGLVIAMVVSVLFLLLL) threads the bilayer. At 267-269 (RFT) the chain is on the cytoplasmic side. A helical transmembrane segment spans residues 270–290 (APVLIWILIFGVLAVGAFGIW). The Extracellular segment spans residues 291–325 (YCYNDYMSLASSNLTFSNVGFTTNVQVYLQVRDTW). N-linked (GlcNAc...) asparagine glycosylation occurs at N303. A helical membrane pass occupies residues 326–346 (LAFLIILCIVEAVLILALIFL). Residues 347–374 (RTRILIAIALIQETSKALGHMMSTLLYP) are Cytoplasmic-facing. The chain crosses the membrane as a helical span at residues 375–395 (VVTFVLLLVCVSYWGITALYL). The Extracellular portion of the chain corresponds to 396 to 464 (ATSGAPIYKV…RNLFNLQIYN (69 aa)). N-linked (GlcNAc...) asparagine glycosylation is found at N409, N421, and N430. Residues 465-485 (VVAFLWCVNFVIALGHCTLAG) form a helical membrane-spanning segment. Residues 486–516 (AFASYYWAFSKPADIPTFPLTQSFMRALRYH) lie on the Cytoplasmic side of the membrane. Residues 517–537 (VGSLAFGALILTLVQIVRIIL) form a helical membrane-spanning segment. The Extracellular segment spans residues 538 to 578 (EYLDHKFKAAQNPCARFLMCCLKCCFWCLEKFIKFINRNAY). A helical membrane pass occupies residues 579 to 599 (IMIAIYGKNFCVSAKNAFFLL). Residues 600 to 615 (MRNIVRVVVLDKVTDL) are Cytoplasmic-facing. A helical transmembrane segment spans residues 616–636 (LLFFGKLLVVGGIGVLAFFFF). At 637 to 655 (SGRIQLPGNTFQTAALNYY) the chain is on the extracellular side. The chain crosses the membrane as a helical span at residues 656–676 (WMPIITVVFGAYLIAHGFFSV). Residues 677 to 723 (YNMGVDTLFLCFLEDLERNDGSAEKPYFMSKNLMKILNKKNKQPKTG) are Cytoplasmic-facing.

It belongs to the CTL (choline transporter-like) family.

It is found in the membrane. The protein resides in the apical cell membrane. It carries out the reaction choline(out) + n H(+)(in) = choline(in) + n H(+)(out). The catalysed reaction is thiamine diphosphate(out) = thiamine diphosphate(in). In terms of biological role, choline transporter that seems to play a role in the choline-acetylcholine system and is required to the efferent innervation of hair cells in the olivocochlear bundle for the maintenance of physiological function of outer hair cells and the protection of hair cells from acoustic injury. Also described as a thiamine pyrophosphate transporter. The polypeptide is Choline transporter-like protein 4 (slc44a4) (Danio rerio (Zebrafish)).